A 249-amino-acid chain; its full sequence is UPF0524 protein C3orf70 homolog B (249 aa).

A disordered region spans residues 174-230 (GPKMGHCSSPSTSEDSGINALGGHFLESCEEESEEEDELSTDGHSSPGSLWDQDECT). The span at 201-213 (SCEEESEEEDELS) shows a compositional bias: acidic residues.

It belongs to the UPF0524 family.

In terms of biological role, plays a role in neuronal and neurobehavioral development. Required for normal expression of the postmitotic and mature neuron markers elavl3 and eno2 and neurobehaviors related to circadian rhythm and altered light-dark conditions. The protein is UPF0524 protein C3orf70 homolog B of Danio rerio (Zebrafish).